The primary structure comprises 515 residues: Cytochrome P450 1A2 (515 aa).

O-linked (GlcNAc) serine glycosylation is present at Ser69. Phe226 is a binding site for substrate. Cys458 is a heme binding site.

It belongs to the cytochrome P450 family. Interacts with PGRMC1; the interaction requires PGRMC1 homodimerization. Heme is required as a cofactor.

The protein resides in the endoplasmic reticulum membrane. It is found in the microsome membrane. The catalysed reaction is an organic molecule + reduced [NADPH--hemoprotein reductase] + O2 = an alcohol + oxidized [NADPH--hemoprotein reductase] + H2O + H(+). The enzyme catalyses 17beta-estradiol + reduced [NADPH--hemoprotein reductase] + O2 = 2-hydroxy-17beta-estradiol + oxidized [NADPH--hemoprotein reductase] + H2O + H(+). It catalyses the reaction 17beta-estradiol + reduced [NADPH--hemoprotein reductase] + O2 = 4-hydroxy-17beta-estradiol + oxidized [NADPH--hemoprotein reductase] + H2O + H(+). It carries out the reaction estrone + reduced [NADPH--hemoprotein reductase] + O2 = 2-hydroxyestrone + oxidized [NADPH--hemoprotein reductase] + H2O + H(+). The catalysed reaction is estrone + reduced [NADPH--hemoprotein reductase] + O2 = 4-hydroxyestrone + oxidized [NADPH--hemoprotein reductase] + H2O + H(+). The enzyme catalyses cholesterol + reduced [NADPH--hemoprotein reductase] + O2 = 25-hydroxycholesterol + oxidized [NADPH--hemoprotein reductase] + H2O + H(+). It catalyses the reaction all-trans-retinol + reduced [NADPH--hemoprotein reductase] + O2 = all-trans-retinal + oxidized [NADPH--hemoprotein reductase] + 2 H2O + H(+). It carries out the reaction all-trans-retinal + reduced [NADPH--hemoprotein reductase] + O2 = all-trans-retinoate + oxidized [NADPH--hemoprotein reductase] + H2O + 2 H(+). The catalysed reaction is (5Z,8Z,11Z,14Z)-eicosatetraenoate + reduced [NADPH--hemoprotein reductase] + O2 = (14R,15S)-epoxy-(5Z,8Z,11Z)-eicosatrienoate + oxidized [NADPH--hemoprotein reductase] + H2O + H(+). The enzyme catalyses (5Z,8Z,11Z,14Z)-eicosatetraenoate + reduced [NADPH--hemoprotein reductase] + O2 = (14S,15R)-epoxy-(5Z,8Z,11Z)-eicosatrienoate + oxidized [NADPH--hemoprotein reductase] + H2O + H(+). It catalyses the reaction (5Z,8Z,11Z,14Z,17Z)-eicosapentaenoate + reduced [NADPH--hemoprotein reductase] + O2 = (17R,18S)-epoxy-(5Z,8Z,11Z,14Z)-eicosatetraenoate + oxidized [NADPH--hemoprotein reductase] + H2O + H(+). It carries out the reaction (4Z,7Z,10Z,13Z,16Z,19Z)-docosahexaenoate + reduced [NADPH--hemoprotein reductase] + O2 = (19R,20S)-epoxy-(4Z,7Z,10Z,13Z,16Z)-docosapentaenoate + oxidized [NADPH--hemoprotein reductase] + H2O + H(+). The catalysed reaction is (5S)-hydroperoxy-(6E,8Z,11Z,14Z)-eicosatetraenoate = 5-oxo-(6E,8Z,11Z,14Z)-eicosatetraenoate + H2O. The enzyme catalyses (12S)-hydroperoxy-(5Z,8Z,10E,14Z)-eicosatetraenoate = 12-oxo-(5Z,8Z,10E,14Z)-eicosatetraenoate + H2O. It catalyses the reaction (15S)-hydroperoxy-(5Z,8Z,11Z,13E)-eicosatetraenoate = 15-oxo-(5Z,8Z,11Z,13E)-eicosatetraenoate + H2O. It carries out the reaction (13S)-hydroperoxy-(9Z,11E)-octadecadienoate = 13-oxo-(9Z,11E)-octadecadienoate + H2O. The catalysed reaction is (5Z,8Z,11Z,14Z)-eicosatetraenoate + reduced [NADPH--hemoprotein reductase] + O2 = 13-hydroxy-(5Z,8Z,11Z,14Z)-eicosatetraenoate + oxidized [NADPH--hemoprotein reductase] + H2O + H(+). The enzyme catalyses (5Z,8Z,11Z,14Z)-eicosatetraenoate + reduced [NADPH--hemoprotein reductase] + O2 = 19-hydroxy-(5Z,8Z,11Z,14Z)-eicosatetraenoate + oxidized [NADPH--hemoprotein reductase] + H2O + H(+). It catalyses the reaction (9Z,12Z)-octadecadienoate + reduced [NADPH--hemoprotein reductase] + O2 = 11-hydroxy-(9Z,12Z)-octadecadienoate + oxidized [NADPH--hemoprotein reductase] + H2O + H(+). Its pathway is cofactor metabolism; retinol metabolism. It participates in steroid metabolism; cholesterol metabolism. It functions in the pathway lipid metabolism; arachidonate metabolism. Its function is as follows. A cytochrome P450 monooxygenase involved in the metabolism of various endogenous substrates, including fatty acids, steroid hormones and vitamins. Mechanistically, uses molecular oxygen inserting one oxygen atom into a substrate, and reducing the second into a water molecule, with two electrons provided by NADPH via cytochrome P450 reductase (NADPH--hemoprotein reductase). Catalyzes the hydroxylation of carbon-hydrogen bonds. Exhibits high catalytic activity for the formation of hydroxyestrogens from estrone (E1) and 17beta-estradiol (E2), namely 2-hydroxy E1 and E2. Metabolizes cholesterol toward 25-hydroxycholesterol, a physiological regulator of cellular cholesterol homeostasis. May act as a major enzyme for all-trans retinoic acid biosynthesis in the liver. Catalyzes two successive oxidative transformation of all-trans retinol to all-trans retinal and then to the active form all-trans retinoic acid. Primarily catalyzes stereoselective epoxidation of the last double bond of polyunsaturated fatty acids (PUFA), displaying a strong preference for the (R,S) stereoisomer. Catalyzes bisallylic hydroxylation and omega-1 hydroxylation of PUFA. May also participate in eicosanoids metabolism by converting hydroperoxide species into oxo metabolites (lipoxygenase-like reaction, NADPH-independent). Plays a role in the oxidative metabolism of xenobiotics. Catalyzes the N-hydroxylation of heterocyclic amines and the O-deethylation of phenacetin. Metabolizes caffeine via N3-demethylation. This is Cytochrome P450 1A2 (CYP1A2) from Cavia porcellus (Guinea pig).